The sequence spans 282 residues: Nucleotide-binding protein XCC2806 (282 aa).

ATP is bound at residue 5 to 12 (GLSGSGKS). Residue 57 to 60 (DVRS) participates in GTP binding.

This sequence belongs to the RapZ-like family.

Functionally, displays ATPase and GTPase activities. The polypeptide is Nucleotide-binding protein XCC2806 (Xanthomonas campestris pv. campestris (strain ATCC 33913 / DSM 3586 / NCPPB 528 / LMG 568 / P 25)).